A 314-amino-acid chain; its full sequence is Chitinase 1 (314 aa).

The signal sequence occupies residues 1–26 (MASVSPSSLLLLFFALLSPLLPLTSA). The GH18 domain maps to 27–296 (LVFREYIGSQ…NVFRYEMQAQ (270 aa)). The active-site Proton donor is Glu-151.

The protein belongs to the glycosyl hydrolase 18 family. Chitinase class II subfamily.

The catalysed reaction is Random endo-hydrolysis of N-acetyl-beta-D-glucosaminide (1-&gt;4)-beta-linkages in chitin and chitodextrins.. In terms of biological role, able to cleave glycolchitin. The polypeptide is Chitinase 1 (Tulipa saxatilis subsp. bakeri (Tulip)).